A 150-amino-acid polypeptide reads, in one-letter code: uncharacterized protein (150 aa).

One can recognise an HTH asnC-type domain in the interval 5–66 (LDKVDRRLLE…KPNYKKLNLG (62 aa)). Residues 24 to 43 (IATLSKKLGIPRTTVHYRIK) constitute a DNA-binding region (H-T-H motif).

This is an uncharacterized protein from Pyrococcus horikoshii (strain ATCC 700860 / DSM 12428 / JCM 9974 / NBRC 100139 / OT-3).